A 449-amino-acid polypeptide reads, in one-letter code: Glutamate--tRNA ligase (449 aa).

Positions 10 to 20 match the 'HIGH' region motif; that stretch reads PSPTGHLHIGN. Residues 214–218 carry the 'KMSKS' region motif; the sequence is KLSKR. Lys217 contributes to the ATP binding site.

It belongs to the class-I aminoacyl-tRNA synthetase family. Glutamate--tRNA ligase type 1 subfamily. In terms of assembly, monomer.

Its subcellular location is the cytoplasm. It carries out the reaction tRNA(Glu) + L-glutamate + ATP = L-glutamyl-tRNA(Glu) + AMP + diphosphate. In terms of biological role, catalyzes the attachment of glutamate to tRNA(Glu) in a two-step reaction: glutamate is first activated by ATP to form Glu-AMP and then transferred to the acceptor end of tRNA(Glu). In Acholeplasma laidlawii (strain PG-8A), this protein is Glutamate--tRNA ligase.